Here is an 802-residue protein sequence, read N- to C-terminus: Vacuolar membrane protease (802 aa).

At 1–13 (MARYNPLAFTSGP) the chain is on the cytoplasmic side. The chain crosses the membrane as a helical span at residues 14 to 34 (VVFFITITYTALLIALLLTHL). The Vacuolar segment spans residues 35 to 357 (TLPSYPSHPP…KVFIVFQLHT (323 aa)). Asn-48, Asn-102, Asn-105, and Asn-112 each carry an N-linked (GlcNAc...) asparagine glycan. The Zn(2+) site is built by His-152 and Asp-164. The Proton acceptor role is filled by Glu-198. 3 residues coordinate Zn(2+): Glu-199, Glu-224, and His-297. The helical transmembrane segment at 358–378 (FFALCVTLLVVAPLTLIGLAW) threads the bilayer. Topologically, residues 379–389 (SLHKADRNYLF) are cytoplasmic. The chain crosses the membrane as a helical span at residues 390 to 409 (ARKAFVYSADDDEPIHLYGW). At 410 to 423 (RGFFRFPIAFGIAT) the chain is on the vacuolar side. Residues 424-444 (SIVVGLAMMLSAWFAVSWFLL) form a helical membrane-spanning segment. The Cytoplasmic segment spans residues 445–457 (HGADAMRPSALQR). The helical transmembrane segment at 458–478 (MYSLLWLFIGSFCLLVFFTIL) threads the bilayer. Residues 479–490 (ANNHQVAAGYPS) lie on the Vacuolar side of the membrane. The helical transmembrane segment at 491-511 (LFCFATVFLANVLSFLELFLA) threads the bilayer. Over 512–609 (PPKSAYAWNV…EQEWSGKLPS (98 aa)) the chain is Cytoplasmic. Disordered stretches follow at residues 528-554 (GSRPLTSSATAARSDNRATTDDDATET) and 570-603 (AGRRDAINEGANSQEPESRRRLDLGQPHSGEQEW). The chain crosses the membrane as a helical span at residues 610-630 (WIWIVQFSLLAPMIVILVGQI). Residues 631-649 (ALLLTSALYQTPSDGNSPL) are Vacuolar-facing. Residues 650–670 (YIYTSIAALAVFLVAPIGPFI) form a helical membrane-spanning segment. The Cytoplasmic portion of the chain corresponds to 671-677 (HRFTHHV). The helical transmembrane segment at 678–698 (PTFLFLLCVATTIYNLVAFPF) threads the bilayer. Residues 699–802 (SEQHKLKVYF…HDDSNNRGRR (104 aa)) are Vacuolar-facing. Residues Asn-746 and Asn-779 are each glycosylated (N-linked (GlcNAc...) asparagine).

It belongs to the peptidase M28 family. Zn(2+) is required as a cofactor.

The protein resides in the vacuole membrane. Its function is as follows. May be involved in vacuolar sorting and osmoregulation. The polypeptide is Vacuolar membrane protease (Leptosphaeria maculans (strain JN3 / isolate v23.1.3 / race Av1-4-5-6-7-8) (Blackleg fungus)).